Consider the following 921-residue polypeptide: Protein translocase subunit SecA (921 aa).

Residues Gln-87, 105–109 (GEGKT), and Asp-515 contribute to the ATP site. The interval 575–594 (RRIDNQLRGRSGRQGDPGSS) is disordered. Residues Cys-905, Cys-907, Cys-916, and Cys-917 each contribute to the Zn(2+) site.

The protein belongs to the SecA family. As to quaternary structure, monomer and homodimer. Part of the essential Sec protein translocation apparatus which comprises SecA, SecYEG and auxiliary proteins SecDF-YajC and YidC. It depends on Zn(2+) as a cofactor.

It localises to the cell inner membrane. Its subcellular location is the cytoplasm. It catalyses the reaction ATP + H2O + cellular proteinSide 1 = ADP + phosphate + cellular proteinSide 2.. Its function is as follows. Part of the Sec protein translocase complex. Interacts with the SecYEG preprotein conducting channel. Has a central role in coupling the hydrolysis of ATP to the transfer of proteins into and across the cell membrane, serving both as a receptor for the preprotein-SecB complex and as an ATP-driven molecular motor driving the stepwise translocation of polypeptide chains across the membrane. This Polynucleobacter necessarius subsp. necessarius (strain STIR1) protein is Protein translocase subunit SecA.